The primary structure comprises 294 residues: 4-hydroxy-tetrahydrodipicolinate synthase (294 aa).

T45 provides a ligand contact to pyruvate. Residue Y133 is the Proton donor/acceptor of the active site. K161 serves as the catalytic Schiff-base intermediate with substrate. Position 203 (I203) interacts with pyruvate.

Belongs to the DapA family. Homotetramer; dimer of dimers.

Its subcellular location is the cytoplasm. The enzyme catalyses L-aspartate 4-semialdehyde + pyruvate = (2S,4S)-4-hydroxy-2,3,4,5-tetrahydrodipicolinate + H2O + H(+). The protein operates within amino-acid biosynthesis; L-lysine biosynthesis via DAP pathway; (S)-tetrahydrodipicolinate from L-aspartate: step 3/4. Its function is as follows. Catalyzes the condensation of (S)-aspartate-beta-semialdehyde [(S)-ASA] and pyruvate to 4-hydroxy-tetrahydrodipicolinate (HTPA). This is 4-hydroxy-tetrahydrodipicolinate synthase from Buchnera aphidicola subsp. Acyrthosiphon pisum (strain 5A).